A 949-amino-acid chain; its full sequence is Nonsense-mediated mRNA decay factor SMG8 (949 aa).

3 disordered regions span residues 564–607 (SGAR…LSPT), 624–652 (NESQASSEQLSNSEQNTSSSGTSSADTEN), and 748–768 (PKQQHHTHHQQQHPGKKQQRW). The segment covering 571 to 581 (EGDDEPEDEVV) has biased composition (acidic residues). Over residues 594–607 (NTASNGCSQPLSPT) the composition is skewed to polar residues. The span at 624–648 (NESQASSEQLSNSEQNTSSSGTSSA) shows a compositional bias: low complexity. Over residues 749–768 (KQQHHTHHQQQHPGKKQQRW) the composition is skewed to basic residues.

This sequence belongs to the SMG8 family.

Involved in nonsense-mediated decay (NMD) of mRNAs containing premature stop codons. Probable component of kinase complex containing nonC and recruited to stalled ribosomes. The sequence is that of Nonsense-mediated mRNA decay factor SMG8 from Drosophila erecta (Fruit fly).